The sequence spans 412 residues: Protein arginine N-methyltransferase 2 (412 aa).

The region spanning 190-412 (TAADPDTYLN…YYYHPKISFA (223 aa)) is the RMT2 domain. S-adenosyl-L-methionine is bound by residues Tyr197, Met227, 250–255 (FGMGII), 271–273 (EAH), 298–299 (WQ), and Asp319.

It belongs to the class I-like SAM-binding methyltransferase superfamily. RMT2 methyltransferase family. In terms of assembly, monomer.

It is found in the cytoplasm. The protein localises to the nucleus. Functionally, S-adenosyl-L-methionine-dependent protein-arginine N-methyltransferase that methylates the delta-nitrogen atom of arginine residues to form N5-methylarginine (type IV) in target proteins. Monomethylates ribosomal protein L12. This chain is Protein arginine N-methyltransferase 2, found in Candida glabrata (strain ATCC 2001 / BCRC 20586 / JCM 3761 / NBRC 0622 / NRRL Y-65 / CBS 138) (Yeast).